The primary structure comprises 282 residues: MTDLIQLKMIIEKAFNNHDSLNTATKGEIRDSVEYTLNLLDKGEIRVAERQENGQWHVHEWLKKAVLMSFRLNPMHIISGGANESFWWDKIPSKFSGWQETDFKKANFRSVPGAIVRHSAYIASNVILMPSFVNLGAYVDEETMIDTWATVGSCAQIGKHVHLSGGVGIGGVLEPLQASPTIIEDHCFIGARSEVVEGCIIREGSVLGMGVFIGKSTKIIDRSTGEVFIGEVPAYSVVVPGSLPGKPLPNGEAGPNLYCAVIVKRVDQKTREKTSINDLLRD.

Residues Arg109 and Asp146 each coordinate substrate.

Belongs to the transferase hexapeptide repeat family. Homotrimer.

Its subcellular location is the cytoplasm. It catalyses the reaction (S)-2,3,4,5-tetrahydrodipicolinate + succinyl-CoA + H2O = (S)-2-succinylamino-6-oxoheptanedioate + CoA. The protein operates within amino-acid biosynthesis; L-lysine biosynthesis via DAP pathway; LL-2,6-diaminopimelate from (S)-tetrahydrodipicolinate (succinylase route): step 1/3. This Bartonella bacilliformis (strain ATCC 35685 / KC583 / Herrer 020/F12,63) protein is 2,3,4,5-tetrahydropyridine-2,6-dicarboxylate N-succinyltransferase.